Reading from the N-terminus, the 368-residue chain is MNDPLASAAEARSATVRLAVDCMGGDHGPSVTLPACRAFLAAHPGAELLLVGRPEALAPAAGWERCTLVSASEVVAMDDPVEVALRRKRDSSLRVAISQVKPVDGVAAAQACVSAGNTGALMAVARYVLKTLDGIDRPAIATVMPNQLDGHTTVLDLGANVDCTAEHLLQFAVMGSALVAAVEGKANPSVGLLNIGEEAIKGSETIKRAGELLRAAAAGGQLNFVGNVEGNDIFTGRTDIVVCDGFVGNVALKTAEGLASMLSSFIRQEFTRSWYSKLAALVALPVLRHFKNRVDHRRYNGAALLGLRGLVFKSHGSADAFAFEQALNRAYDAARNRLLDRVHDRISATLQALPADAGAPDGQVPEAA.

The protein belongs to the PlsX family. As to quaternary structure, homodimer. Probably interacts with PlsY.

It is found in the cytoplasm. The enzyme catalyses a fatty acyl-[ACP] + phosphate = an acyl phosphate + holo-[ACP]. The protein operates within lipid metabolism; phospholipid metabolism. Catalyzes the reversible formation of acyl-phosphate (acyl-PO(4)) from acyl-[acyl-carrier-protein] (acyl-ACP). This enzyme utilizes acyl-ACP as fatty acyl donor, but not acyl-CoA. This chain is Phosphate acyltransferase, found in Methylibium petroleiphilum (strain ATCC BAA-1232 / LMG 22953 / PM1).